The primary structure comprises 606 residues: Putative auxin response factor 21 (606 aa).

The TF-B3 DNA-binding region spans 126 to 228 (FTKVLTASDT…ELRVGIRRAR (103 aa)). Positions 511–592 (RTCTKVQMQG…MVKKILIYSK (82 aa)) constitute a PB1 domain.

Belongs to the ARF family. In terms of assembly, homodimers and heterodimers.

The protein localises to the nucleus. Its function is as follows. Auxin response factors (ARFs) are transcriptional factors that bind specifically to the DNA sequence 5'-TGTCTC-3' found in the auxin-responsive promoter elements (AuxREs). Could act as transcriptional activator or repressor. Formation of heterodimers with Aux/IAA proteins may alter their ability to modulate early auxin response genes expression. This is Putative auxin response factor 21 (ARF21) from Arabidopsis thaliana (Mouse-ear cress).